The primary structure comprises 134 residues: Large ribosomal subunit protein mL41 (134 aa).

The transit peptide at 1–13 (MGFLTAVTQGLVR) directs the protein to the mitochondrion.

It belongs to the mitochondrion-specific ribosomal protein mL41 family. In terms of assembly, component of the mitochondrial ribosome large subunit (39S) which comprises a 16S rRNA and about 50 distinct proteins. Interacts with BCL2. Was also identified in the 28S mitochondrial ribosome.

It localises to the mitochondrion. In terms of biological role, component of the mitochondrial ribosome large subunit. Also involved in apoptosis and cell cycle. Enhances p53/TP53 stability, thereby contributing to p53/TP53-induced apoptosis in response to growth-inhibitory condition. Enhances p53/TP53 translocation to the mitochondria. Has the ability to arrest the cell cycle at the G1 phase, possibly by stabilizing the CDKN1A and CDKN1B (p27Kip1) proteins. The protein is Large ribosomal subunit protein mL41 (Mrpl41) of Rattus norvegicus (Rat).